Here is a 270-residue protein sequence, read N- to C-terminus: Putative hydro-lyase Noca_0093 (270 aa).

Belongs to the D-glutamate cyclase family.

The polypeptide is Putative hydro-lyase Noca_0093 (Nocardioides sp. (strain ATCC BAA-499 / JS614)).